Consider the following 269-residue polypeptide: Type II iodothyronine deiodinase (269 aa).

Over 1–7 (MGLLSVD) the chain is Lumenal. A helical; Signal-anchor for type III membrane protein membrane pass occupies residues 8 to 28 (LLITLQILPWFFSNCLFLALY). The Cytoplasmic segment spans residues 29 to 269 (DSVVLLKHVI…RUVPTCELIM (241 aa)). The active site involves U128. Non-standard amino acids (selenocysteine) are located at U128 and U261.

Belongs to the iodothyronine deiodinase family. Predominantly monomer. Can form homodimers but homodimerization is not essential for enzyme activity.

The protein localises to the endoplasmic reticulum membrane. It carries out the reaction 3,3',5-triiodo-L-thyronine + iodide + A + H(+) = L-thyroxine + AH2. The enzyme catalyses 3,3'-diiodo-L-thyronine + iodide + A + H(+) = 3,3',5'-triiodo-L-thyronine + AH2. The catalysed reaction is 3'-iodo-L-thyronine + iodide + A + H(+) = 3',5'-diiodo-L-thyronine + AH2. It catalyses the reaction 3,3'-diiodothyronamine + iodide + A + H(+) = 3,3',5'-triiodothyronamine + AH2. It carries out the reaction 3'-iodothyronamine + iodide + A + H(+) = 3',5'-diiodothyronamine + AH2. Plays a crucial role in the metabolism of thyroid hormones (TH) and has specific roles in TH activation and inactivation by deiodination. Catalyzes the deiodination of L-thyroxine (T4) to 3,5,3'-triiodothyronine (T3), 3,3',5'-triiodothyronine (rT3) to 3,3'-diiodothyronine (3,3'-T2) and 3',5'-diiodothyronine (3',5'-T2) to 3'-monoiodothyronine (3'-T1) via outer-ring deiodination (ORD). Catalyzes the phenolic ring deiodinations of 3,3',5'-triiodothyronamine and 3',5'- diiodothyronamine. This chain is Type II iodothyronine deiodinase (dio2), found in Neoceratodus forsteri (Australian lungfish).